The sequence spans 1526 residues: High affinity cGMP-specific 3',5'-cyclic phosphodiesterase 9A (1526 aa).

Positions 1 to 43 (MYQDSGCSSSSSRRGSSSAAAATSTAATAAETAAAAAATTTSS) are enriched in low complexity. Disordered regions lie at residues 1–48 (MYQD…DEET), 266–348 (SSRS…SGTA), and 393–476 (RHHH…ASDC). 2 stretches are compositionally biased toward basic and acidic residues: residues 270-282 (RSSE…HEQD) and 305-314 (EHPSEKPERT). 2 stretches are compositionally biased toward low complexity: residues 324-348 (IAVT…SGTA) and 401-440 (QQHQ…ATAT). Residues 441–462 (PSVEQPATSGTTNIHLQPTSLP) are compositionally biased toward polar residues. The PDEase domain occupies 664-985 (VKRRFLEICD…EYYRRLNDAQ (322 aa)). His-740 (proton donor) is an active-site residue. 740–744 (HNFRH) lines the 3',5'-cyclic GMP pocket. Zn(2+) contacts are provided by His-744, His-780, Asp-781, and Asp-890. The 3',5'-cyclic GMP site is built by Asp-781 and Asp-890. Asp-781 is a binding site for Mg(2+). Disordered stretches follow at residues 986–1170 (TKTR…SSGG), 1265–1284 (TEAD…KKIP), 1314–1351 (SNGS…GSSW), 1372–1406 (RFGS…DGLG), and 1469–1496 (RYSS…LTTG). Residues 993 to 1005 (ADSNTSATSDSNS) are compositionally biased toward low complexity. A compositionally biased stretch (gly residues) spans 1033–1057 (NSQGSGGGGGGGGGGGAGGGTGSGC). Positions 1065 to 1093 (VSPQMPRSGSGISVKSRRSIPSQKSASRT) are enriched in polar residues. Basic and acidic residues predominate over residues 1125–1136 (VAEKTSKFKVDT). Low complexity predominate over residues 1139–1148 (SSNRSKSSHS). The segment covering 1314 to 1324 (SNGSTRSSASS) has biased composition (low complexity). The segment covering 1325–1340 (GRGGSGVPGGSGGSGM) has biased composition (gly residues). Low complexity-rich tracts occupy residues 1341-1350 (PGPSAGSGSS) and 1375-1397 (STRS…NANG). Residues 1470 to 1486 (YSSNDSSRHPSNNTLQS) show a composition bias toward polar residues.

It belongs to the cyclic nucleotide phosphodiesterase family. PDE9 subfamily. Zn(2+) is required as a cofactor. It depends on Mg(2+) as a cofactor. Expressed in Malpighian tubules and adult fly head.

It catalyses the reaction 3',5'-cyclic GMP + H2O = GMP + H(+). The protein operates within purine metabolism; 3',5'-cyclic GMP degradation; GMP from 3',5'-cyclic GMP: step 1/1. In terms of biological role, specifically hydrolyzes the second messenger cGMP, which is a key regulator of many important physiological processes. Highly specific: compared to other members of the cyclic nucleotide phosphodiesterase family, has the highest affinity and selectivity for cGMP. This Drosophila melanogaster (Fruit fly) protein is High affinity cGMP-specific 3',5'-cyclic phosphodiesterase 9A.